We begin with the raw amino-acid sequence, 288 residues long: uncharacterized protein (288 aa).

The region spanning 5 to 81 is the HTH rpiR-type domain; it reads GNVLNKIGSL…LELSIELATK (77 aa). The H-T-H motif DNA-binding region spans 41 to 60; the sequence is LSEIAKHLQVGEATLVRFCR. Residues 129 to 269 form the SIS domain; sequence VVKVLKKARR…YALLVQGEED (141 aa).

This is an uncharacterized protein from Haemophilus influenzae (strain ATCC 51907 / DSM 11121 / KW20 / Rd).